A 541-amino-acid polypeptide reads, in one-letter code: Membrane protein insertase YidC (541 aa).

A run of 6 helical transmembrane segments spans residues 6-26 (NILL…WQAD), 325-345 (LVVD…LLMF), 349-369 (FVGN…GLLF), 420-440 (GGCL…WVLL), 457-477 (LSVQ…MFIM), and 500-520 (VIFT…WLVG).

The protein belongs to the OXA1/ALB3/YidC family. Type 1 subfamily. As to quaternary structure, interacts with the Sec translocase complex via SecD. Specifically interacts with transmembrane segments of nascent integral membrane proteins during membrane integration.

The protein resides in the cell inner membrane. In terms of biological role, required for the insertion and/or proper folding and/or complex formation of integral membrane proteins into the membrane. Involved in integration of membrane proteins that insert both dependently and independently of the Sec translocase complex, as well as at least some lipoproteins. Aids folding of multispanning membrane proteins. This is Membrane protein insertase YidC from Shewanella sp. (strain W3-18-1).